A 143-amino-acid polypeptide reads, in one-letter code: uncharacterized protein (143 aa).

This sequence to E.coli YifN.

This is an uncharacterized protein from Haemophilus influenzae (strain ATCC 51907 / DSM 11121 / KW20 / Rd).